The following is a 120-amino-acid chain: Host cell factor C1 regulator 1 (120 aa).

Residues Met-1–Leu-30 are disordered. The segment covering Thr-20 to Leu-30 has biased composition (polar residues). The segment at Asp-58 to Tyr-61 is interaction with HCFC1. The Nuclear export signal signature appears at Ile-92 to Leu-101.

Interacts with HCFC1.

It is found in the cytoplasm. The protein localises to the nucleus. Its function is as follows. Regulates HCFC1 activity by modulating its subcellular localization. Overexpression of HCFC1R1 leads to accumulation of HCFC1 in the cytoplasm. HCFC1R1-mediated export may provide the pool of cytoplasmic HCFC1 required for import of virion-derived VP16 into the nucleus. The chain is Host cell factor C1 regulator 1 (Hcfc1r1) from Mus musculus (Mouse).